The chain runs to 234 residues: ATP-dependent dethiobiotin synthetase BioD (234 aa).

An ATP-binding site is contributed by 12 to 17; that stretch reads DVGKTF. Position 16 (T16) interacts with Mg(2+). Residue K37 is part of the active site. T41 serves as a coordination point for substrate. Residues D54 and 115–118 each bind ATP; that span reads EGAG. Positions 54 and 115 each coordinate Mg(2+).

Belongs to the dethiobiotin synthetase family. As to quaternary structure, homodimer. It depends on Mg(2+) as a cofactor.

It is found in the cytoplasm. It catalyses the reaction (7R,8S)-7,8-diammoniononanoate + CO2 + ATP = (4R,5S)-dethiobiotin + ADP + phosphate + 3 H(+). It participates in cofactor biosynthesis; biotin biosynthesis; biotin from 7,8-diaminononanoate: step 1/2. Catalyzes a mechanistically unusual reaction, the ATP-dependent insertion of CO2 between the N7 and N8 nitrogen atoms of 7,8-diaminopelargonic acid (DAPA, also called 7,8-diammoniononanoate) to form a ureido ring. This is ATP-dependent dethiobiotin synthetase BioD from Lysinibacillus sphaericus (Bacillus sphaericus).